Reading from the N-terminus, the 196-residue chain is Large ribosomal subunit protein uL18 (196 aa).

This sequence belongs to the universal ribosomal protein uL18 family. As to quaternary structure, part of the 50S ribosomal subunit. Contacts the 5S and 23S rRNAs.

This is one of the proteins that bind and probably mediate the attachment of the 5S RNA into the large ribosomal subunit, where it forms part of the central protuberance. In Desulfurococcus amylolyticus (strain DSM 18924 / JCM 16383 / VKM B-2413 / 1221n) (Desulfurococcus kamchatkensis), this protein is Large ribosomal subunit protein uL18.